The chain runs to 413 residues: Gamma-glutamyl phosphate reductase (413 aa).

Belongs to the gamma-glutamyl phosphate reductase family.

The protein resides in the cytoplasm. The enzyme catalyses L-glutamate 5-semialdehyde + phosphate + NADP(+) = L-glutamyl 5-phosphate + NADPH + H(+). The protein operates within amino-acid biosynthesis; L-proline biosynthesis; L-glutamate 5-semialdehyde from L-glutamate: step 2/2. Catalyzes the NADPH-dependent reduction of L-glutamate 5-phosphate into L-glutamate 5-semialdehyde and phosphate. The product spontaneously undergoes cyclization to form 1-pyrroline-5-carboxylate. The chain is Gamma-glutamyl phosphate reductase from Lactococcus lactis subsp. cremoris (strain SK11).